Here is a 300-residue protein sequence, read N- to C-terminus: 33 kDa chaperonin (300 aa).

Intrachain disulfides connect cysteine 247–cysteine 249 and cysteine 280–cysteine 283.

The protein belongs to the HSP33 family. Under oxidizing conditions two disulfide bonds are formed involving the reactive cysteines. Under reducing conditions zinc is bound to the reactive cysteines and the protein is inactive.

It is found in the cytoplasm. Redox regulated molecular chaperone. Protects both thermally unfolding and oxidatively damaged proteins from irreversible aggregation. Plays an important role in the bacterial defense system toward oxidative stress. This chain is 33 kDa chaperonin, found in Prochlorococcus marinus (strain MIT 9312).